A 336-amino-acid polypeptide reads, in one-letter code: MSLLEDIVDLLKCVLEYFGVPPDMLVPVWESTHCGQYRSLVRMIGTNLPLSPYPRLRFQIPLQTFNKHSHIDVSVDSPAIPTLADVLWLVEDEGDSHTKFRNAVPLRKKCVPHGYETPSLGSVSVKAQRGGGVLAQSTQPDALLKISALEEELQRLRAQIATIITAPAGPVVSPTDPGTPCSAPKPAPVLTSTPVCPPPPPPPPPPAMPTRTEVSMSEMIQQRQAAKKETLAQCGPSLTTAPSMLEVLRDLNQVKLRSVERSPGGTPIRRRRSKGVACSSDPAALIAEALKRKFAHRQRDDSFGKENHSAEPSPFSSPDTPRIFQHTRRSQGRIHL.

Residues 139-166 (QPDALLKISALEEELQRLRAQIATIITA) are a coiled coil. The tract at residues 296–336 (HRQRDDSFGKENHSAEPSPFSSPDTPRIFQHTRRSQGRIHL) is disordered. Positions 297–309 (RQRDDSFGKENHS) are enriched in basic and acidic residues. Positions 325–336 (QHTRRSQGRIHL) are enriched in basic residues.

It belongs to the MTFR1 family.

The protein resides in the mitochondrion. Its function is as follows. May play a role in mitochondrial aerobic respiration. Can also promote mitochondrial fission. The polypeptide is Mitochondrial fission regulator 2 (mtfr2) (Danio rerio (Zebrafish)).